The following is a 155-amino-acid chain: uncharacterized protein (155 aa).

Residues M1–L34 are disordered. The span at Q8–V22 shows a compositional bias: basic and acidic residues. The helical transmembrane segment at M115 to F135 threads the bilayer.

It is found in the membrane. This is an uncharacterized protein from Homo sapiens (Human).